A 660-amino-acid polypeptide reads, in one-letter code: MEHYPFKLHSEFEPQGDQPEAIQKIVNGVNEGKRHQTLLGATGTGKTFTMSNVIKQVGKPTLIIAHNKTLAGQLYSEFKEFFPENRVEYFVSYYDYYQPEAYVPSTDTFIEKDASINDEIDQLRHSATSALFERDDVIVIASVSCIYGLGNPEEYRDLVVSIRAGMEMDRSELLKKLVDVQYTRNDIDFRRGTFRVRGDVVEIFPASREEMCIRVEFFGDEIDRIREVNYLTGEVLRERDHFAIFPASHFVTREEKMKSAIQRIENELEERLAELNAENKLLEAQRLEQRTNYDLEMMREMGFCSGIENYSVHLTLRPMGSTPYTLLDYFGDDWLVMIDESHVTLPQIRGMYNGDRARKQVLVDHGFRLPSALDNRPLKFEEFEEKTKQLVYVSATPGPFELEHTDEMVQQIIRPTGLLDPKIEVRPTENQIDDLLGEIQDRIDRNERVLVTTLTKKMSEDLTIYLKEAGIKVNYLHSEIKTLERIEIIRDLRMGTYDVIVGINLLREGIDIPEVSLVVILDADKEGFLRSQRSLVQTIGRAARNSRGEVIMYGDKITDSMRYALDETERRRTIQEAYNEKHNITPTTINKKIHDVISATVENDETNEQQQTEVPKKMTKKEREKTIANIEKEMKQAAKDLDFEKATELRDMLFELKAEG.

Residues Asn27–Arg414 enclose the Helicase ATP-binding domain. Residue Gly40–Thr47 participates in ATP binding. A Beta-hairpin motif is present at residues Tyr93–Ile116. The Helicase C-terminal domain occupies Gln431–Ile593. The interval Asn603 to Glu622 is disordered. One can recognise a UVR domain in the interval Glu624–Glu659.

The protein belongs to the UvrB family. As to quaternary structure, forms a heterotetramer with UvrA during the search for lesions. Interacts with UvrC in an incision complex.

It is found in the cytoplasm. Functionally, the UvrABC repair system catalyzes the recognition and processing of DNA lesions. A damage recognition complex composed of 2 UvrA and 2 UvrB subunits scans DNA for abnormalities. Upon binding of the UvrA(2)B(2) complex to a putative damaged site, the DNA wraps around one UvrB monomer. DNA wrap is dependent on ATP binding by UvrB and probably causes local melting of the DNA helix, facilitating insertion of UvrB beta-hairpin between the DNA strands. Then UvrB probes one DNA strand for the presence of a lesion. If a lesion is found the UvrA subunits dissociate and the UvrB-DNA preincision complex is formed. This complex is subsequently bound by UvrC and the second UvrB is released. If no lesion is found, the DNA wraps around the other UvrB subunit that will check the other stand for damage. This is UvrABC system protein B from Staphylococcus saprophyticus subsp. saprophyticus (strain ATCC 15305 / DSM 20229 / NCIMB 8711 / NCTC 7292 / S-41).